Here is a 181-residue protein sequence, read N- to C-terminus: U1 small nuclear ribonucleoprotein C (181 aa).

A Matrin-type zinc finger spans residues 2–34 (PKCDYCDVYLTHDSMSVRKAHNSGRNHLRNVVD). Composition is skewed to pro residues over residues 129–143 (PGMP…PGGL) and 150–174 (PIPP…PPPG). The segment at 129–181 (PGMPAGMPFPPPGGLPPNFQFPIPPPGGFPGMPPPGQGFPGMPPPGGNHDERR) is disordered.

This sequence belongs to the U1 small nuclear ribonucleoprotein C family. As to quaternary structure, U1 snRNP is composed of the 7 core Sm proteins B/B', D1, D2, D3, E, F and G that assemble in a heptameric protein ring on the Sm site of the small nuclear RNA to form the core snRNP, and at least 3 U1 snRNP-specific proteins U1-70K, U1-A and U1-C. U1-C interacts with U1 snRNA and the 5' splice-site region of the pre-mRNA.

The protein localises to the nucleus. Component of the spliceosomal U1 snRNP, which is essential for recognition of the pre-mRNA 5' splice-site and the subsequent assembly of the spliceosome. U1-C is directly involved in initial 5' splice-site recognition for both constitutive and regulated alternative splicing. The interaction with the 5' splice-site seems to precede base-pairing between the pre-mRNA and the U1 snRNA. Stimulates commitment or early (E) complex formation by stabilizing the base pairing of the 5' end of the U1 snRNA and the 5' splice-site region. The sequence is that of U1 small nuclear ribonucleoprotein C from Sclerotinia sclerotiorum (strain ATCC 18683 / 1980 / Ss-1) (White mold).